A 1361-amino-acid polypeptide reads, in one-letter code: Cell migration-inducing and hyaluronan-binding protein (1361 aa).

Residues 1–30 (MGAAGRQDFLFKAMLTISWLTLTCFPGATS) form the signal peptide. Residues 44–166 (QPWNPGHDQD…KKLSWTFLNK (123 aa)) form the G8 domain. 5 N-linked (GlcNAc...) asparagine glycosylation sites follow: Asn-119, Asn-165, Asn-312, Asn-370, and Asn-420. Residues 176–317 (GGYFFERSWG…GEYFNVSLSS (142 aa)) enclose the GG-type lectin 1 domain. The tract at residues 295 to 591 (AAARVFKLFQ…IHHTFSRCVT (297 aa)) is necessary for its endoplasmic reticulum (ER) retention and interaction with HSPA5. PbH1 repeat units follow at residues 572 to 594 (DPPT…TVHG), 595 to 617 (SNGL…FTED), 719 to 741 (IPLG…IIDN), and 798 to 819 (GGDV…TLAS). Residues Asn-889 and Asn-921 are each glycosylated (N-linked (GlcNAc...) asparagine). The GG-type lectin 2 domain occupies 1227–1361 (NDFAYIEVDG…PIPVVKKKKL (135 aa)).

Belongs to the CEMIP family. As to quaternary structure, interacts with EPHA2 and ITPR3. Interacts with HSPA5/BIP; the interaction induces calcium leakage from the endoplasmic reticulum and cell migration. Interacts with clathrin heavy chain/CLTC. Post-translationally, N-glycosylated; glycosylation is not necessary for HA-binding. Expressed in dermal and in synovial fibroblasts. Strongly expressed in gastric cancers compared with the paired normal tissues. Strongly expressed in both ductal carcinoma and invasive breast cancer cells compared with benign epithelial cells (at protein level). Strongly expressed in brain, placenta, prostate, breast, lung and testis. Expressed in fibroblasts, epithelial cells and cancer cells. In ear, it is specifically expressed in inner ear. Expressed in cochlea and vestibule tissues. Strongly expressed in gastric cancers compared with the paired normal tissues. Strongly expressed in colon adenocarcinomas compared with normal colonic mucosas. Strongly expressed in breast cancer as compared to normal breast tissue.

The protein resides in the nucleus. The protein localises to the cytoplasm. Its subcellular location is the endoplasmic reticulum. It is found in the cell membrane. It localises to the membrane. The protein resides in the clathrin-coated pit. The protein localises to the secreted. It catalyses the reaction Random hydrolysis of (1-&gt;4)-linkages between N-acetyl-beta-D-glucosamine and D-glucuronate residues in hyaluronate.. With respect to regulation, activity is up-regulated by histamine. Functionally, mediates depolymerization of hyaluronic acid (HA) via the cell membrane-associated clathrin-coated pit endocytic pathway. Binds to hyaluronic acid. Hydrolyzes high molecular weight hyaluronic acid to produce an intermediate-sized product, a process that may occur through rapid vesicle endocytosis and recycling without intracytoplasmic accumulation or digestion in lysosomes. Involved in hyaluronan catabolism in the dermis of the skin and arthritic synovium. Positively regulates epithelial-mesenchymal transition (EMT), and hence tumor cell growth, invasion and cancer dissemination. In collaboration with HSPA5/BIP, promotes cancer cell migration in a calcium and PKC-dependent manner. May be involved in hearing. In Homo sapiens (Human), this protein is Cell migration-inducing and hyaluronan-binding protein.